The chain runs to 338 residues: Glycerol-3-phosphate dehydrogenase [NAD(P)+] (338 aa).

3 residues coordinate NADPH: Ser12, Trp13, and Lys110. The sn-glycerol 3-phosphate site is built by Lys110, Gly141, and Ser143. Ala145 is an NADPH binding site. Sn-glycerol 3-phosphate is bound by residues Lys196, Asp249, Ser259, Arg260, and Asn261. Catalysis depends on Lys196, which acts as the Proton acceptor. Arg260 contributes to the NADPH binding site. The NADPH site is built by Val284 and Glu286.

Belongs to the NAD-dependent glycerol-3-phosphate dehydrogenase family.

Its subcellular location is the cytoplasm. It carries out the reaction sn-glycerol 3-phosphate + NAD(+) = dihydroxyacetone phosphate + NADH + H(+). It catalyses the reaction sn-glycerol 3-phosphate + NADP(+) = dihydroxyacetone phosphate + NADPH + H(+). It functions in the pathway membrane lipid metabolism; glycerophospholipid metabolism. Functionally, catalyzes the reduction of the glycolytic intermediate dihydroxyacetone phosphate (DHAP) to sn-glycerol 3-phosphate (G3P), the key precursor for phospholipid synthesis. The protein is Glycerol-3-phosphate dehydrogenase [NAD(P)+] of Pediococcus pentosaceus (strain ATCC 25745 / CCUG 21536 / LMG 10740 / 183-1w).